The chain runs to 283 residues: Bifunctional protein FolD (283 aa).

NADP(+) contacts are provided by residues 165 to 167 (GRS), serine 190, and valine 231.

This sequence belongs to the tetrahydrofolate dehydrogenase/cyclohydrolase family. As to quaternary structure, homodimer.

The catalysed reaction is (6R)-5,10-methylene-5,6,7,8-tetrahydrofolate + NADP(+) = (6R)-5,10-methenyltetrahydrofolate + NADPH. The enzyme catalyses (6R)-5,10-methenyltetrahydrofolate + H2O = (6R)-10-formyltetrahydrofolate + H(+). The protein operates within one-carbon metabolism; tetrahydrofolate interconversion. Its function is as follows. Catalyzes the oxidation of 5,10-methylenetetrahydrofolate to 5,10-methenyltetrahydrofolate and then the hydrolysis of 5,10-methenyltetrahydrofolate to 10-formyltetrahydrofolate. The polypeptide is Bifunctional protein FolD (Bacillus pumilus (strain SAFR-032)).